We begin with the raw amino-acid sequence, 228 residues long: MDIDHCMPVFDMAYSDDNHLPYYIQRSTHHVVRDVDYTGFICYPLQVDLNDNVEVGADIYHMKIKTMRFNVDIYNNDVATKFPGWVRFIVFCTPPVSSWVNDGCSSLFSPFVGVNSFIDPKLLKRDGHGITVLHDGIYCLCHQEHFTRSFEFNFRGPGNYTLTSDVCWSPATNVDSIYVACVASWCGDSAFMLQSDSVSWVHKRFWQRPVLEFGQCLDDLPDHDNDCG.

The protein belongs to the benyvirus P25 protein family.

Its subcellular location is the host nucleus. It is found in the host cytoplasm. Probably influences symptom severity in a synergistic fashion with P25. This chain is Protein P26 (P26), found in Beta macrocarpa (Beet).